Reading from the N-terminus, the 347-residue chain is MTLDHQIINPTLKWSQPAVPSGGPLVQHAHTTLDSDAGLTENPLTKLLAIGKEDDNAQWHMEDVIEDIIGMESSFKEEGADSPLLMQRTLSGSILDVYSGEQGISPINMGLTSASCPSSLPMKREITETDTRALAKERQKKDNHNLIERRRRYNINYRIKELGTLIPKSNDPDMRWNKGTILKASVEYIKWLQKEQQRARELEHRQKKLEQANRRLLLRIQELEIQARTHGLPTLASLGTVDLGAHVTKQQSHPEQNSVDYCQQLTVSQGPSPELCDQAIAFSDPLSYFTDLSFSAALKEEQRLDGMLLDDTISPFGTDPLLSATSPAVSKESSRRSSFSSDDGDEL.

Positions 1–119 (MTLDHQIINP…GLTSASCPSS (119 aa)) are necessary for transcriptional transactivation. In terms of domain architecture, bHLH spans 139–192 (QKKDNHNLIERRRRYNINYRIKELGTLIPKSNDPDMRWNKGTILKASVEYIKWL). The interval 271-347 (PSPELCDQAI…SFSSDDGDEL (77 aa)) is necessary for transcriptional transactivation. Residues 319–347 (DPLLSATSPAVSKESSRRSSFSSDDGDEL) form a disordered region. Positions 326 to 341 (SPAVSKESSRRSSFSS) are enriched in low complexity.

Belongs to the MiT/TFE family. As to quaternary structure, homodimer. Forms heterodimers with TFE3. Forms heterodimers with MITF. Interacts with MITF. Expressed moderately in spleen, kidney, bone marrow, small intestine and leukocytes. Expressed weakly in testis, trachea and colon.

The protein localises to the nucleus. In terms of biological role, transcriptional regulator that acts as a repressor or an activator. Acts as a transcriptional repressor on minimal promoter containing element F (that includes an E-box sequence). Binds to element F in an E-box sequence-specific manner. Acts as a transcriptional transactivator on the proximal promoter region of the tartrate-resistant acid phosphatase (TRAP) E-box containing promoter. Collaborates with MITF in target gene activation. Acts as a transcriptional repressor on minimal promoter containing mu E3 enhancer sequence. Binds to mu E3 DNA sequence of the immunoglobulin heavy-chain gene enhancer. Binds DNA in a homo- or heterodimeric form. This is Transcription factor EC (TFEC) from Homo sapiens (Human).